Consider the following 259-residue polypeptide: Imidazole glycerol phosphate synthase subunit HisF (259 aa).

Residues D11 and D130 contribute to the active site.

Belongs to the HisA/HisF family. In terms of assembly, heterodimer of HisH and HisF.

Its subcellular location is the cytoplasm. The catalysed reaction is 5-[(5-phospho-1-deoxy-D-ribulos-1-ylimino)methylamino]-1-(5-phospho-beta-D-ribosyl)imidazole-4-carboxamide + L-glutamine = D-erythro-1-(imidazol-4-yl)glycerol 3-phosphate + 5-amino-1-(5-phospho-beta-D-ribosyl)imidazole-4-carboxamide + L-glutamate + H(+). The protein operates within amino-acid biosynthesis; L-histidine biosynthesis; L-histidine from 5-phospho-alpha-D-ribose 1-diphosphate: step 5/9. Functionally, IGPS catalyzes the conversion of PRFAR and glutamine to IGP, AICAR and glutamate. The HisF subunit catalyzes the cyclization activity that produces IGP and AICAR from PRFAR using the ammonia provided by the HisH subunit. The polypeptide is Imidazole glycerol phosphate synthase subunit HisF (Desulfosudis oleivorans (strain DSM 6200 / JCM 39069 / Hxd3) (Desulfococcus oleovorans)).